The primary structure comprises 292 residues: HTH-type transcriptional regulator BlaA (292 aa).

One can recognise an HTH lysR-type domain in the interval 5–62 (LPLNALRAFEASARHLNFTKAALELYVTQGAVSQQVRMLEERLGVILFKRLPRGLEMT). Positions 22 to 41 (FTKAALELYVTQGAVSQQVR) form a DNA-binding region, H-T-H motif.

It belongs to the LysR transcriptional regulatory family.

In terms of biological role, positive regulator of the expression of the gene (blaB) for beta-lactamase. The protein is HTH-type transcriptional regulator BlaA (blaA) of Proteus vulgaris.